We begin with the raw amino-acid sequence, 74 residues long: Antimicrobial peptide AcrAP1 (74 aa).

Positions 1 to 22 are cleaved as a signal peptide; it reads MEIKYLLTVFLVLLIVSDHCQA. Lysine 40 carries the lysine amide modification. The propeptide occupies 46–74; sequence DLDGQIDRFRNFRKRDAELEELLSKLPIY.

This sequence belongs to the non-disulfide-bridged peptide (NDBP) superfamily. Short antimicrobial peptide (group 4) family. In terms of tissue distribution, expressed by the venom gland.

It is found in the secreted. It localises to the target cell membrane. In terms of biological role, has antimicrobial activity against the Gram-positive bacteria S.aureus (MIC=8 uM) and the yeast C.albicans (MIC=16 uM). Causes hemolysis on horse erythrocytes (64 uM for 100% hemolysis). Minimum bactericidal concentrations have also been tested against S.aureus and is four-fold higher (MBC=32 uM). The sequence is that of Antimicrobial peptide AcrAP1 from Androctonus crassicauda (Arabian fat-tailed scorpion).